We begin with the raw amino-acid sequence, 45 residues long: Thymosin beta-15A homolog (45 aa).

Residues 19 to 45 (KKTNTEEKNTLPSKETIEQEKECVKSS) form a disordered region. A compositionally biased stretch (basic and acidic residues) spans 21 to 45 (TNTEEKNTLPSKETIEQEKECVKSS).

It belongs to the thymosin beta family.

The protein localises to the cytoplasm. The protein resides in the cytoskeleton. Its function is as follows. Plays an important role in the organization of the cytoskeleton. Binds to and sequesters actin monomers (G actin) and therefore inhibits actin polymerization. This Coturnix japonica (Japanese quail) protein is Thymosin beta-15A homolog.